Reading from the N-terminus, the 144-residue chain is MGASKVKQDMPPPGGYGPIDYKRNLPRRGLSGYSMLALGIGTLIYGHWSMMKWNRERRRLQIEDFEARIALLPLLQAETDRRTLQMLRENLEEEAIIMKDVPDWKVGESVFHTTRWVAPLIGELYGLRTTEEALHASHGFMWYA.

A helical membrane pass occupies residues 30-51 (LSGYSMLALGIGTLIYGHWSMM).

The protein belongs to the complex I NDUFA13 subunit family. As to quaternary structure, complex I is composed of 45 different subunits. Interacts with CARD15, but not with CARD4. Interacts with STAT3, but not with STAT1, STAT2 and STAT5A. Interacts with OLFM4.

Its subcellular location is the mitochondrion inner membrane. It localises to the nucleus. Accessory subunit of the mitochondrial membrane respiratory chain NADH dehydrogenase (Complex I), that is believed not to be involved in catalysis. Complex I functions in the transfer of electrons from NADH to the respiratory chain. The immediate electron acceptor for the enzyme is believed to be ubiquinone. Involved in the interferon/all-trans-retinoic acid (IFN/RA) induced cell death. This apoptotic activity is inhibited by interaction with viral IRF1. Prevents the transactivation of STAT3 target genes. May play a role in CARD15-mediated innate mucosal responses and serve to regulate intestinal epithelial cell responses to microbes. The sequence is that of NADH dehydrogenase [ubiquinone] 1 alpha subcomplex subunit 13 (NDUFA13) from Pongo pygmaeus (Bornean orangutan).